The following is a 346-amino-acid chain: Serine/threonine-protein phosphatase PP1(4.8) (346 aa).

A disordered region spans residues 46-65; sequence QSAQTQESTPKTNGTGRATT. Mn(2+) contacts are provided by Asp-102, His-104, Asp-130, and Asn-162. Residue His-163 is the Proton donor of the active site. Mn(2+) contacts are provided by His-211 and His-287.

This sequence belongs to the PPP phosphatase family. PP-1 subfamily. The cofactor is Mn(2+).

The enzyme catalyses O-phospho-L-seryl-[protein] + H2O = L-seryl-[protein] + phosphate. It carries out the reaction O-phospho-L-threonyl-[protein] + H2O = L-threonyl-[protein] + phosphate. The sequence is that of Serine/threonine-protein phosphatase PP1(4.8) from Trypanosoma brucei brucei.